We begin with the raw amino-acid sequence, 417 residues long: Zinc-finger homeodomain protein 4 (417 aa).

Over residues 1–12 the composition is skewed to polar residues; the sequence is MVSILQLQTRTE. 2 disordered regions span residues 1–22 and 31–50; these read MVSILQLQTRTEASPASSASAA and RQQQEQEGEEEEEEFEFQER. A compositionally biased stretch (low complexity) spans 13-22; it reads ASPASSASAA. Residues 36–46 show a composition bias toward acidic residues; it reads QEGEEEEEEFE. The segment at 145-194 adopts a ZF-HD dimerization-type; degenerate zinc-finger fold; it reads YRECLKNHAAAIGGNATDGCGEFMPSGEEGSLEALKCSACGCHRNFHRKE. Disordered stretches follow at residues 281 to 309 and 361 to 417; these read DEMDVSGGGGGVGRGGGSSSSSKKRFRTK and NLAK…LKLE. A compositionally biased stretch (gly residues) spans 286 to 298; that stretch reads SGGGGGVGRGGGS. Positions 303 to 366 form a DNA-binding region, homeobox; it reads KKRFRTKFTA…NNKHNLAKKP (64 aa). Positions 368–417 are enriched in pro residues; sequence PSSPPPPPQIPPMSMPPSPPPPQIPPMSMPPSPPPMPMPMPPSPPQLKLE.

As to quaternary structure, homo- and heterodimer with other ZFHD proteins.

It localises to the nucleus. Putative transcription factor. The polypeptide is Zinc-finger homeodomain protein 4 (ZHD4) (Oryza sativa subsp. japonica (Rice)).